The sequence spans 1004 residues: NADH:acrylate oxidoreductase (1004 aa).

Threonine 455 is subject to FMN phosphoryl threonine. Positions 508, 527, 535, 536, 540, 541, and 775 each coordinate FAD. Residue arginine 834 is the Proton donor of the active site. Residues histidine 941, glutamate 970, alanine 985, and leucine 986 each contribute to the FAD site.

It belongs to the FAD-dependent oxidoreductase 2 family. FRD/SDH subfamily. FAD is required as a cofactor. The cofactor is FMN. Post-translationally, is flavinylated on Thr-455 by ApbE, encoded in a neighboring gene. Flavinylation is essential for catalytic activity.

It catalyses the reaction acrylate + NADH + H(+) = propanoate + NAD(+). Its function is as follows. Catalyzes the NADH-dependent reduction of acrylate to propanoate. The principal role of ARD in Vibrio seems to be the energy-saving detoxification of acrylate coming from the environment. May also use acrylate as the terminal electron acceptor for NADH regeneration at oxygen deficiency. NADPH cannot replace NADH as the electron donor. Is also able to reduce methacrylate in vitro, but with a much lower efficiency. The sequence is that of NADH:acrylate oxidoreductase from Vibrio harveyi (Beneckea harveyi).